Reading from the N-terminus, the 273-residue chain is Outer surface protein A (273 aa).

Positions 1–16 are cleaved as a signal peptide; the sequence is MKKYLLGIGLILALIA. A lipid anchor (N-palmitoyl cysteine) is attached at C17. C17 carries S-diacylglycerol cysteine lipidation.

The protein belongs to the OspA lipoprotein family.

It localises to the cell outer membrane. The protein resides in the cell surface. Induces host (human and mouse) cytokine release by monocyte cell lines via TLR2 and CD14; nonlipidated protein does not stimulate host cells. The sequence is that of Outer surface protein A from Borreliella burgdorferi (strain ATCC 35210 / DSM 4680 / CIP 102532 / B31) (Borrelia burgdorferi).